A 443-amino-acid polypeptide reads, in one-letter code: Glutamyl-tRNA reductase (443 aa).

Residues Thr49 to Arg52, Ser109, Glu114 to Gln116, and Gln120 contribute to the substrate site. Cys50 functions as the Nucleophile in the catalytic mechanism. Residue Gly189–Gly194 participates in NADP(+) binding.

This sequence belongs to the glutamyl-tRNA reductase family. In terms of assembly, homodimer.

The enzyme catalyses (S)-4-amino-5-oxopentanoate + tRNA(Glu) + NADP(+) = L-glutamyl-tRNA(Glu) + NADPH + H(+). It functions in the pathway porphyrin-containing compound metabolism; protoporphyrin-IX biosynthesis; 5-aminolevulinate from L-glutamyl-tRNA(Glu): step 1/2. Its function is as follows. Catalyzes the NADPH-dependent reduction of glutamyl-tRNA(Glu) to glutamate 1-semialdehyde (GSA). This is Glutamyl-tRNA reductase from Bacillus mycoides (strain KBAB4) (Bacillus weihenstephanensis).